A 194-amino-acid polypeptide reads, in one-letter code: Holliday junction branch migration complex subunit RuvA (194 aa).

A domain I region spans residues 1-64 (MIGRLRGILA…EDSVALYGFL (64 aa)). A domain II region spans residues 65–140 (REGERRLFRD…RAADFSSGAP (76 aa)). Positions 140-144 (PITGQ) are flexible linker. Positions 145-194 (LGPDAVSEATVALQQLGYKPAEAARMARDAGAEGDEVATVIRKALQAALR) are domain III.

The protein belongs to the RuvA family. As to quaternary structure, homotetramer. Forms an RuvA(8)-RuvB(12)-Holliday junction (HJ) complex. HJ DNA is sandwiched between 2 RuvA tetramers; dsDNA enters through RuvA and exits via RuvB. An RuvB hexamer assembles on each DNA strand where it exits the tetramer. Each RuvB hexamer is contacted by two RuvA subunits (via domain III) on 2 adjacent RuvB subunits; this complex drives branch migration. In the full resolvosome a probable DNA-RuvA(4)-RuvB(12)-RuvC(2) complex forms which resolves the HJ.

Its subcellular location is the cytoplasm. The RuvA-RuvB-RuvC complex processes Holliday junction (HJ) DNA during genetic recombination and DNA repair, while the RuvA-RuvB complex plays an important role in the rescue of blocked DNA replication forks via replication fork reversal (RFR). RuvA specifically binds to HJ cruciform DNA, conferring on it an open structure. The RuvB hexamer acts as an ATP-dependent pump, pulling dsDNA into and through the RuvAB complex. HJ branch migration allows RuvC to scan DNA until it finds its consensus sequence, where it cleaves and resolves the cruciform DNA. The chain is Holliday junction branch migration complex subunit RuvA from Xanthomonas euvesicatoria pv. vesicatoria (strain 85-10) (Xanthomonas campestris pv. vesicatoria).